Reading from the N-terminus, the 277-residue chain is Small ribosomal subunit protein uS3 (277 aa).

The 69-residue stretch at 43–111 (IRKVMNKDLE…QVQLNIFEVK (69 aa)) folds into the KH type-2 domain. Positions 216 to 277 (FEEQQAQQGN…EAAVEPETKE (62 aa)) are disordered. Residues 264 to 277 (EVSKEAAVEPETKE) show a composition bias toward basic and acidic residues.

Belongs to the universal ribosomal protein uS3 family. Part of the 30S ribosomal subunit. Forms a tight complex with proteins S10 and S14.

Functionally, binds the lower part of the 30S subunit head. Binds mRNA in the 70S ribosome, positioning it for translation. The chain is Small ribosomal subunit protein uS3 from Bifidobacterium animalis subsp. lactis (strain AD011).